Here is a 932-residue protein sequence, read N- to C-terminus: Lipoxygenase 2.2, chloroplastic (932 aa).

Residues M79 to P219 enclose the PLAT domain. A Lipoxygenase domain is found at S223–I932. Basic and acidic residues predominate over residues P270 to Y284. The interval P270–M311 is disordered. The segment covering P285 to R294 has biased composition (basic residues). Residues S295–M311 show a composition bias toward basic and acidic residues. Fe cation-binding residues include H588, H593, H778, N782, and I932.

Belongs to the lipoxygenase family. It depends on Fe cation as a cofactor.

It is found in the plastid. The protein resides in the chloroplast. The enzyme catalyses (9Z,12Z)-octadecadienoate + O2 = (13S)-hydroperoxy-(9Z,11E)-octadecadienoate. It catalyses the reaction (9Z,12Z,15Z)-octadecatrienoate + O2 = (13S)-hydroperoxy-(9Z,11E,15Z)-octadecatrienoate. It functions in the pathway lipid metabolism; oxylipin biosynthesis. Plant lipoxygenase may be involved in a number of diverse aspects of plant physiology including growth and development, pest resistance, and senescence or responses to wounding. This enzyme exhibits linoleate 13-lipoxygenase activity. This is Lipoxygenase 2.2, chloroplastic (LOX2.2) from Hordeum vulgare (Barley).